A 465-amino-acid polypeptide reads, in one-letter code: Iron-sulfur cluster assembly SufBD family protein SH2035 (465 aa).

Belongs to the iron-sulfur cluster assembly SufBD family.

The polypeptide is Iron-sulfur cluster assembly SufBD family protein SH2035 (Staphylococcus haemolyticus (strain JCSC1435)).